A 370-amino-acid polypeptide reads, in one-letter code: Glucan endo-1,3-beta-glucosidase, basic vacuolar isoform GLB (370 aa).

An N-terminal signal peptide occupies residues 1–32 (MSTSDKHNTPQMAAITLLGLLLVASTIEIAGA). Q33 is modified (pyrrolidone carboxylic acid). The active-site Proton donor is the E128. The active-site Nucleophile is the E273. Residues 349-370 (VSGGVWDSSVETNATASLISEM) constitute a propeptide, removed in mature form. N-linked (GlcNAc...) asparagine glycosylation is present at N361.

It belongs to the glycosyl hydrolase 17 family. As to expression, is expressed primarily in epidermal cell of healthy plant, and following induction by ethylene, accumulates in mesophyll cells.

It is found in the vacuole. It catalyses the reaction Hydrolysis of (1-&gt;3)-beta-D-glucosidic linkages in (1-&gt;3)-beta-D-glucans.. Functionally, implicated in the defense of plants against pathogens. The sequence is that of Glucan endo-1,3-beta-glucosidase, basic vacuolar isoform GLB from Nicotiana tabacum (Common tobacco).